The primary structure comprises 486 residues: MSSSSASQPSHDQLATKAQAWSALFSEPMSDLVKRYTSSVFFDKRLWQADIAGSLAHAEMLAAQGIISAQDHADIQKGMAQITQEIASGAFEWKLDLEDVHLNIEARLTQLVGDAGKRLHTGRSRNDQVATDVRLWLRGEIDLIEGLLSELQLSLVEVAEQNVEVILPGFTHLQVAQPVSFAHHLLAYVEMFARDAERMRDVRRRVNVLPLGSAALAGTTYPLDRERVAKTLGMEGVCQNSLDGVSDRDFAIEFTAAASLCMVHVSRLSEELIIWMSQNFGFIKIADRFTTGSSIMPQKKNPDVPELARGKTGRVVGHLMGLITLMKGQPLAYNKDNQEDKEPLFDTVDTLKDTLRIFAEMIGGQMNPATGCKDGGITVNAEAMRAAALKGYATATDLADYLVKKGLPFRDAHETVAHAVKAAVSHSVDLSELPLAVLQGFHPAIEKDVFDALSLQGSLNARNTLGGTAPAQVRTQLARHRARLSA.

It belongs to the lyase 1 family. Argininosuccinate lyase subfamily.

The protein localises to the cytoplasm. It carries out the reaction 2-(N(omega)-L-arginino)succinate = fumarate + L-arginine. It participates in amino-acid biosynthesis; L-arginine biosynthesis; L-arginine from L-ornithine and carbamoyl phosphate: step 3/3. The protein is Argininosuccinate lyase of Acidovorax ebreus (strain TPSY) (Diaphorobacter sp. (strain TPSY)).